Here is a 218-residue protein sequence, read N- to C-terminus: Cytochrome b6 (218 aa).

Residues 35-55 (IFYCLGGITLVCFLVQFATGF) traverse the membrane as a helical segment. C38 contacts heme c. Positions 89 and 103 each coordinate heme b. A run of 3 helical transmembrane segments spans residues 93–113 (ASMMVLMLILHVFRVYLTGGF), 119–139 (LTWVTGVVMAVITVSFGVTGY), and 189–209 (LHTFVLPWLLAVFMLMHFLMI). H190 and H205 together coordinate heme b.

This sequence belongs to the cytochrome b family. PetB subfamily. As to quaternary structure, the 4 large subunits of the cytochrome b6-f complex are cytochrome b6, subunit IV (17 kDa polypeptide, PetD), cytochrome f and the Rieske protein, while the 4 small subunits are PetG, PetL, PetM and PetN. The complex functions as a dimer. It depends on heme b as a cofactor. The cofactor is heme c.

It is found in the cellular thylakoid membrane. Its function is as follows. Component of the cytochrome b6-f complex, which mediates electron transfer between photosystem II (PSII) and photosystem I (PSI), cyclic electron flow around PSI, and state transitions. This is Cytochrome b6 from Prochlorococcus marinus (strain MIT 9303).